Consider the following 240-residue polypeptide: 4-hydroxy-tetrahydrodipicolinate reductase (240 aa).

NAD(+) contacts are provided by residues 79–81 (ATT) and 103–106 (SANM). Histidine 135 functions as the Proton donor/acceptor in the catalytic mechanism. Residue histidine 136 coordinates (S)-2,3,4,5-tetrahydrodipicolinate. The active-site Proton donor is lysine 139. 145 to 146 (GT) is a binding site for (S)-2,3,4,5-tetrahydrodipicolinate.

This sequence belongs to the DapB family.

It is found in the cytoplasm. The enzyme catalyses (S)-2,3,4,5-tetrahydrodipicolinate + NAD(+) + H2O = (2S,4S)-4-hydroxy-2,3,4,5-tetrahydrodipicolinate + NADH + H(+). The catalysed reaction is (S)-2,3,4,5-tetrahydrodipicolinate + NADP(+) + H2O = (2S,4S)-4-hydroxy-2,3,4,5-tetrahydrodipicolinate + NADPH + H(+). Its pathway is amino-acid biosynthesis; L-lysine biosynthesis via DAP pathway; (S)-tetrahydrodipicolinate from L-aspartate: step 4/4. In terms of biological role, catalyzes the conversion of 4-hydroxy-tetrahydrodipicolinate (HTPA) to tetrahydrodipicolinate. The chain is 4-hydroxy-tetrahydrodipicolinate reductase from Staphylococcus aureus (strain MSSA476).